The following is a 36-amino-acid chain: Photosystem I reaction center subunit VIII (36 aa).

A helical membrane pass occupies residues 5-27; it reads FLPSILVPLVGLVFPAIAIASLF.

This sequence belongs to the PsaI family.

The protein localises to the plastid. It is found in the chloroplast thylakoid membrane. May help in the organization of the PsaL subunit. This Chaetosphaeridium globosum (Charophycean green alga) protein is Photosystem I reaction center subunit VIII.